A 230-amino-acid chain; its full sequence is NAD(P)H-hydrate epimerase (230 aa).

Residues 11 to 218 (AIDVDQELFT…ALQRKYELNL (208 aa)) form the YjeF N-terminal domain. 61–65 (NNGGD) is a binding site for (6S)-NADPHX. 2 residues coordinate K(+): Asn62 and Asp126. Residues 130 to 136 (GFSFKPP) and Asp159 each bind (6S)-NADPHX. K(+) is bound at residue Ser162.

It belongs to the NnrE/AIBP family. K(+) serves as cofactor.

The enzyme catalyses (6R)-NADHX = (6S)-NADHX. It carries out the reaction (6R)-NADPHX = (6S)-NADPHX. In terms of biological role, catalyzes the epimerization of the S- and R-forms of NAD(P)HX, a damaged form of NAD(P)H that is a result of enzymatic or heat-dependent hydration. This is a prerequisite for the S-specific NAD(P)H-hydrate dehydratase to allow the repair of both epimers of NAD(P)HX. This Drosophila erecta (Fruit fly) protein is NAD(P)H-hydrate epimerase.